Consider the following 142-residue polypeptide: Large ribosomal subunit protein uL11 (142 aa).

Belongs to the universal ribosomal protein uL11 family. In terms of assembly, part of the ribosomal stalk of the 50S ribosomal subunit. Interacts with L10 and the large rRNA to form the base of the stalk. L10 forms an elongated spine to which L12 dimers bind in a sequential fashion forming a multimeric L10(L12)X complex. One or more lysine residues are methylated.

Functionally, forms part of the ribosomal stalk which helps the ribosome interact with GTP-bound translation factors. The protein is Large ribosomal subunit protein uL11 of Pseudoalteromonas atlantica (strain T6c / ATCC BAA-1087).